Reading from the N-terminus, the 378-residue chain is Transcription elongation factor TFIIS (378 aa).

The residue at position 1 (Met1) is an N-acetylmethionine. Residues 10–89 (EGAKKAADAA…EIWKKVVIEE (80 aa)) form the TFIIS N-terminal domain. Residues 210-333 (VRDKIRELLV…DCERGLAAKA (124 aa)) form the TFIIS central domain. The segment at 336–376 (DQFKCGRCGQRKCTYYQMQTRSADEPMTTYVTCVNCDNHWK) adopts a TFIIS-type zinc-finger fold. Residues Cys340, Cys343, Cys368, and Cys371 each coordinate Zn(2+).

Expressed in roots, leaves and flowers.

It localises to the nucleus. Necessary for efficient RNA polymerase II transcription elongation past template-encoded arresting sites. Involved in the control of seed dormancy and germination. This chain is Transcription elongation factor TFIIS, found in Arabidopsis thaliana (Mouse-ear cress).